A 369-amino-acid chain; its full sequence is uncharacterized protein (369 aa).

Belongs to the Gfo/Idh/MocA family.

This is an uncharacterized protein from Schizosaccharomyces pombe (strain 972 / ATCC 24843) (Fission yeast).